Reading from the N-terminus, the 349-residue chain is Magnesium-protoporphyrin IX monomethyl ester [oxidative] cyclase (349 aa).

The protein belongs to the AcsF family. The cofactor is Fe cation.

Its subcellular location is the plastid. The protein localises to the chloroplast. It catalyses the reaction Mg-protoporphyrin IX 13-monomethyl ester + 3 NADPH + 3 O2 + 2 H(+) = 3,8-divinyl protochlorophyllide a + 3 NADP(+) + 5 H2O. The protein operates within porphyrin-containing compound metabolism; chlorophyll biosynthesis (light-independent). Catalyzes the formation of the isocyclic ring in chlorophyll biosynthesis. Mediates the cyclase reaction, which results in the formation of divinylprotochlorophyllide (Pchlide) characteristic of all chlorophylls from magnesium-protoporphyrin IX 13-monomethyl ester (MgPMME). This is Magnesium-protoporphyrin IX monomethyl ester [oxidative] cyclase from Porphyra purpurea (Red seaweed).